The primary structure comprises 177 residues: Large ribosomal subunit protein uL6 (177 aa).

It belongs to the universal ribosomal protein uL6 family. Part of the 50S ribosomal subunit.

Its function is as follows. This protein binds to the 23S rRNA, and is important in its secondary structure. It is located near the subunit interface in the base of the L7/L12 stalk, and near the tRNA binding site of the peptidyltransferase center. In Pseudomonas fluorescens (strain SBW25), this protein is Large ribosomal subunit protein uL6.